The chain runs to 342 residues: Putative TPR repeat-containing protein R856 (342 aa).

TPR repeat units lie at residues 36–69 (VHIF…IFNG), 77–110 (FYSV…IKDM), 119–152 (VYAL…NEKL), 161–194 (AFVL…YREK), 203–236 (AFTI…FNKI), 245–278 (AFSL…YKNV), and 291–324 (ASCL…FEST).

This is Putative TPR repeat-containing protein R856 from Acanthamoeba polyphaga mimivirus (APMV).